The following is a 185-amino-acid chain: Ribosome-recycling factor (185 aa).

It belongs to the RRF family.

The protein resides in the cytoplasm. Functionally, responsible for the release of ribosomes from messenger RNA at the termination of protein biosynthesis. May increase the efficiency of translation by recycling ribosomes from one round of translation to another. This is Ribosome-recycling factor from Syntrophobacter fumaroxidans (strain DSM 10017 / MPOB).